A 63-amino-acid chain; its full sequence is Small ribosomal subunit protein eS31 (63 aa).

Zn(2+) contacts are provided by Cys-31, Cys-34, Cys-50, and Cys-53. The C4-type zinc finger occupies 31-53 (CPRCGSIMAHHMKPVERWACGKC).

The protein belongs to the eukaryotic ribosomal protein eS31 family. In terms of assembly, part of the 30S ribosomal subunit. Zn(2+) is required as a cofactor.

The chain is Small ribosomal subunit protein eS31 from Sulfurisphaera tokodaii (strain DSM 16993 / JCM 10545 / NBRC 100140 / 7) (Sulfolobus tokodaii).